A 72-amino-acid polypeptide reads, in one-letter code: Cell division protein ZapB (72 aa).

The stretch at 1–71 forms a coiled coil; it reads MSLEILDQLE…IRSLLGKFDN (71 aa).

Belongs to the ZapB family. Homodimer. The ends of the coiled-coil dimer bind to each other, forming polymers. Interacts with FtsZ.

The protein localises to the cytoplasm. Functionally, non-essential, abundant cell division factor that is required for proper Z-ring formation. It is recruited early to the divisome by direct interaction with FtsZ, stimulating Z-ring assembly and thereby promoting cell division earlier in the cell cycle. Its recruitment to the Z-ring requires functional FtsA or ZipA. The sequence is that of Cell division protein ZapB from Haemophilus influenzae (strain 86-028NP).